A 276-amino-acid polypeptide reads, in one-letter code: Large ribosomal subunit protein uL2 (276 aa).

2 disordered regions span residues 36–58 (PLHK…GGGH) and 214–276 (LGKR…RRKK).

This sequence belongs to the universal ribosomal protein uL2 family. As to quaternary structure, part of the 50S ribosomal subunit. Forms a bridge to the 30S subunit in the 70S ribosome.

One of the primary rRNA binding proteins. Required for association of the 30S and 50S subunits to form the 70S ribosome, for tRNA binding and peptide bond formation. It has been suggested to have peptidyltransferase activity; this is somewhat controversial. Makes several contacts with the 16S rRNA in the 70S ribosome. The chain is Large ribosomal subunit protein uL2 from Halalkalibacterium halodurans (strain ATCC BAA-125 / DSM 18197 / FERM 7344 / JCM 9153 / C-125) (Bacillus halodurans).